The sequence spans 1416 residues: Gag-Pro-Pol polyprotein (1416 aa).

Gly-2 carries the N-myristoyl glycine; by host lipid modification. Residues 100–103 (PPPY) carry the PPXY motif motif. CCHC-type zinc fingers lie at residues 345–362 (GPCY…DCPT) and 370–387 (GPCP…DCPT). The Peptidase A2 domain maps to 447–525 (ALMLVDTGAE…DKWQILGRDV (79 aa)). Asp-452 acts as the Protease; shared with dimeric partner in catalysis. The Reverse transcriptase domain maps to 586–776 (LEAGYISPWD…SPVPFLGQMV (191 aa)). Mg(2+) contacts are provided by Asp-652, Asp-727, Asp-728, Asp-1005, Glu-1036, Asp-1057, Asp-1118, Asp-1190, and Asp-1247. An RNase H type-1 domain is found at 996–1126 (IPAALCLFSD…VDQLLPLETP (131 aa)). One can recognise an Integrase catalytic domain in the interval 1179–1343 (RGWAPNHIWQ…SPPLAVISEG (165 aa)). A DNA-binding region (integrase-type) is located at residues 1352–1400 (KLFLYKLPGQNNRRWLGPLPALVEASGGALLATNPPVWVPWRLLKAFKC).

Belongs to the retroviral Pol polyprotein family. Homodimer; the homodimers are part of the immature particles. Interacts with human TSG101 and NEDD4; these interactions are essential for budding and release of viral particles. As to quaternary structure, homodimer; further assembles as homohexamers. Mg(2+) serves as cofactor. Phosphorylation of the matrix protein p15 by MAPK1 seems to play a role in budding. In terms of processing, myristoylated. Myristoylation of the matrix (MA) domain mediates the transport and binding of Gag polyproteins to the host plasma membrane and is required for the assembly of viral particles. Post-translationally, specific enzymatic cleavages by the viral protease yield mature proteins. The polyprotein is cleaved during and after budding, this process is termed maturation. The protease is autoproteolytically processed at its N- and C-termini.

Its subcellular location is the virion. The catalysed reaction is Endonucleolytic cleavage to 5'-phosphomonoester.. It carries out the reaction DNA(n) + a 2'-deoxyribonucleoside 5'-triphosphate = DNA(n+1) + diphosphate. In terms of biological role, the matrix domain targets Gag, Gag-Pro and Gag-Pro-Pol polyproteins to the plasma membrane via a multipartite membrane binding signal, that includes its myristoylated N-terminus. Matrix protein. Functionally, forms the spherical core of the virus that encapsulates the genomic RNA-nucleocapsid complex. Its function is as follows. Binds strongly to viral nucleic acids and promote their aggregation. Also destabilizes the nucleic acids duplexes via highly structured zinc-binding motifs. In terms of biological role, the aspartyl protease mediates proteolytic cleavages of Gag and Gag-Pol polyproteins during or shortly after the release of the virion from the plasma membrane. Cleavages take place as an ordered, step-wise cascade to yield mature proteins. This process is called maturation. Displays maximal activity during the budding process just prior to particle release from the cell. RT is a multifunctional enzyme that converts the viral RNA genome into dsDNA in the cytoplasm, shortly after virus entry into the cell. This enzyme displays a DNA polymerase activity that can copy either DNA or RNA templates, and a ribonuclease H (RNase H) activity that cleaves the RNA strand of RNA-DNA heteroduplexes in a partially processive 3' to 5'-endonucleasic mode. Conversion of viral genomic RNA into dsDNA requires many steps. A tRNA-Pro binds to the primer-binding site (PBS) situated at the 5'-end of the viral RNA. RT uses the 3' end of the tRNA primer to perform a short round of RNA-dependent minus-strand DNA synthesis. The reading proceeds through the U5 region and ends after the repeated (R) region which is present at both ends of viral RNA. The portion of the RNA-DNA heteroduplex is digested by the RNase H, resulting in a ssDNA product attached to the tRNA primer. This ssDNA/tRNA hybridizes with the identical R region situated at the 3' end of viral RNA. This template exchange, known as minus-strand DNA strong stop transfer, can be either intra- or intermolecular. RT uses the 3' end of this newly synthesized short ssDNA to perform the RNA-dependent minus-strand DNA synthesis of the whole template. RNase H digests the RNA template except for a polypurine tract (PPT) situated at the 5' end of the genome. It is not clear if both polymerase and RNase H activities are simultaneous. RNase H probably can proceed both in a polymerase-dependent (RNA cut into small fragments by the same RT performing DNA synthesis) and a polymerase-independent mode (cleavage of remaining RNA fragments by free RTs). Secondly, RT performs DNA-directed plus-strand DNA synthesis using the PPT that has not been removed by RNase H as primer. PPT and tRNA primers are then removed by RNase H. The 3' and 5' ssDNA PBS regions hybridize to form a circular dsDNA intermediate. Strand displacement synthesis by RT to the PBS and PPT ends produces a blunt ended, linear dsDNA copy of the viral genome that includes long terminal repeats (LTRs) at both ends. Functionally, catalyzes viral DNA integration into the host chromosome, by performing a series of DNA cutting and joining reactions. The protein is Gag-Pro-Pol polyprotein (pol) of Bos taurus (Bovine).